The sequence spans 396 residues: 1-deoxy-D-xylulose 5-phosphate reductoisomerase (396 aa).

Residues T13, G14, S15, V16, and N127 each coordinate NADPH. K128 serves as a coordination point for 1-deoxy-D-xylulose 5-phosphate. E129 provides a ligand contact to NADPH. D153 lines the Mn(2+) pocket. Residues S154, E155, S184, and H207 each contribute to the 1-deoxy-D-xylulose 5-phosphate site. E155 contacts Mn(2+). G213 contributes to the NADPH binding site. 1-deoxy-D-xylulose 5-phosphate is bound by residues S220, N225, K226, and E229. E229 serves as a coordination point for Mn(2+).

Belongs to the DXR family. It depends on Mg(2+) as a cofactor. Requires Mn(2+) as cofactor.

The enzyme catalyses 2-C-methyl-D-erythritol 4-phosphate + NADP(+) = 1-deoxy-D-xylulose 5-phosphate + NADPH + H(+). Its pathway is isoprenoid biosynthesis; isopentenyl diphosphate biosynthesis via DXP pathway; isopentenyl diphosphate from 1-deoxy-D-xylulose 5-phosphate: step 1/6. In terms of biological role, catalyzes the NADPH-dependent rearrangement and reduction of 1-deoxy-D-xylulose-5-phosphate (DXP) to 2-C-methyl-D-erythritol 4-phosphate (MEP). In Pseudomonas fluorescens (strain SBW25), this protein is 1-deoxy-D-xylulose 5-phosphate reductoisomerase.